We begin with the raw amino-acid sequence, 349 residues long: tRNA pseudouridine synthase D (349 aa).

F27 is a binding site for substrate. The active-site Nucleophile is D80. N129 contributes to the substrate binding site. One can recognise a TRUD domain in the interval 155-303 (GVPNYFGAQR…VEAARRAMLL (149 aa)). Substrate is bound at residue F329.

Belongs to the pseudouridine synthase TruD family.

It carries out the reaction uridine(13) in tRNA = pseudouridine(13) in tRNA. Responsible for synthesis of pseudouridine from uracil-13 in transfer RNAs. The chain is tRNA pseudouridine synthase D from Escherichia coli O7:K1 (strain IAI39 / ExPEC).